Here is a 274-residue protein sequence, read N- to C-terminus: Large ribosomal subunit protein uL2 (274 aa).

The segment at 224-274 (VAMNPVDHPHGGGEGRTSGGRHPVTPWGIPTKGYKTRRNKRSNKLIVQKRK) is disordered. The span at 257–274 (YKTRRNKRSNKLIVQKRK) shows a compositional bias: basic residues.

Belongs to the universal ribosomal protein uL2 family. Part of the 50S ribosomal subunit. Forms a bridge to the 30S subunit in the 70S ribosome.

Functionally, one of the primary rRNA binding proteins. Required for association of the 30S and 50S subunits to form the 70S ribosome, for tRNA binding and peptide bond formation. It has been suggested to have peptidyltransferase activity; this is somewhat controversial. Makes several contacts with the 16S rRNA in the 70S ribosome. The sequence is that of Large ribosomal subunit protein uL2 from Francisella tularensis subsp. tularensis (strain FSC 198).